Here is a 143-residue protein sequence, read N- to C-terminus: Succinate dehydrogenase assembly factor 2, mitochondrial (143 aa).

This sequence belongs to the SDHAF2 family. As to quaternary structure, interacts with the flavoprotein subunit within the SDH catalytic dimer.

The protein localises to the mitochondrion matrix. Functionally, plays an essential role in the assembly of succinate dehydrogenase (SDH), an enzyme complex (also referred to as respiratory complex II) that is a component of both the tricarboxylic acid (TCA) cycle and the mitochondrial electron transport chain, and which couples the oxidation of succinate to fumarate with the reduction of ubiquinone (coenzyme Q) to ubiquinol. Required for flavinylation (covalent attachment of FAD) of the flavoprotein subunit of the SDH catalytic dimer. This chain is Succinate dehydrogenase assembly factor 2, mitochondrial, found in Schizosaccharomyces japonicus (strain yFS275 / FY16936) (Fission yeast).